A 171-amino-acid chain; its full sequence is Secretion monitor (171 aa).

An N-terminal signal peptide occupies residues 1–36 (MIGILNRWRQFGRRYFWPHLLLGMVAASLGLPTSLN).

Belongs to the SecM family.

Its subcellular location is the cytoplasm. It is found in the cytosol. The protein resides in the periplasm. Functionally, regulates secA expression by translational coupling of the secM secA operon. Translational pausing at a specific Pro residue 5 residues before the end of the protein may allow disruption of a mRNA repressor helix that normally suppresses secA translation initiation. This chain is Secretion monitor, found in Pectobacterium carotovorum subsp. carotovorum (strain PC1).